The primary structure comprises 142 residues: Putative pre-16S rRNA nuclease (142 aa).

It belongs to the YqgF nuclease family.

The protein resides in the cytoplasm. In terms of biological role, could be a nuclease involved in processing of the 5'-end of pre-16S rRNA. The chain is Putative pre-16S rRNA nuclease from Desulfitobacterium hafniense (strain DSM 10664 / DCB-2).